The sequence spans 202 residues: Large ribosomal subunit protein uL5 (202 aa).

A compositionally biased stretch (low complexity) spans 1 to 17; the sequence is MSAKAATKNATKVAVKA. A disordered region spans residues 1-30; sequence MSAKAATKNATKVAVKAPEATTPVETKKSK.

Belongs to the universal ribosomal protein uL5 family. As to quaternary structure, component of the large ribosomal subunit.

The protein localises to the nucleus. The protein resides in the cytoplasm. Component of the ribosome, a large ribonucleoprotein complex responsible for the synthesis of proteins in the cell. The small ribosomal subunit (SSU) binds messenger RNAs (mRNAs) and translates the encoded message by selecting cognate aminoacyl-transfer RNA (tRNA) molecules. The large subunit (LSU) contains the ribosomal catalytic site termed the peptidyl transferase center (PTC), which catalyzes the formation of peptide bonds, thereby polymerizing the amino acids delivered by tRNAs into a polypeptide chain. The nascent polypeptides leave the ribosome through a tunnel in the LSU and interact with protein factors that function in enzymatic processing, targeting, and the membrane insertion of nascent chains at the exit of the ribosomal tunnel. This is Large ribosomal subunit protein uL5 (rpl11) from Dictyostelium discoideum (Social amoeba).